A 296-amino-acid chain; its full sequence is Protein RarD (296 aa).

The Cytoplasmic portion of the chain corresponds to 1-11 (MDAKQTRQGVL). The helical transmembrane segment at 12–34 (LALAAYFIWGIAPAYFKLIYYVP) threads the bilayer. The 128-residue stretch at 18 to 145 (FIWGIAPAYF…AICGVLVQLW (128 aa)) folds into the EamA domain. The Periplasmic portion of the chain corresponds to 35–37 (ADE). Residues 38–60 (ILTHRVIWSFFFMVVLMSICRQW) form a helical membrane-spanning segment. The Cytoplasmic portion of the chain corresponds to 61-72 (SYLKTLIQTPQK). The helical transmembrane segment at 73–95 (IFMLAVSAVLIGGNWLLFIWAVN) threads the bilayer. The Periplasmic segment spans residues 96–99 (NHHM). Residues 100–122 (LEASLGYFINPLVNIVLGMIFLG) traverse the membrane as a helical segment. The Cytoplasmic segment spans residues 123–128 (ERFRRM). Residues 129-146 (QWLAVILAICGVLVQLWT) form a helical membrane-spanning segment. Residues 147-149 (FGS) are Periplasmic-facing. The chain crosses the membrane as a helical span at residues 150–167 (LPIIALGLAFSFAFYGLV). Residues 168 to 179 (RKKIAVEAQTGM) are Cytoplasmic-facing. The chain crosses the membrane as a helical span at residues 180 to 197 (LIETMWLLPVAAIYLFAI). Residues 198–211 (ADSSTSHMGQNPMS) are Periplasmic-facing. Residues 212–234 (LNLLLIAAGIVTTVPLLCFTAAA) traverse the membrane as a helical segment. Over 235–238 (TRLR) the chain is Cytoplasmic. The chain crosses the membrane as a helical span at residues 239–261 (LSTLGFFQYIGPTLMFLLAVTFY). Over 262-270 (GEKPGADKM) the chain is Periplasmic. The helical transmembrane segment at 271 to 290 (VTFAFIWVALAIFVMDAIYT) threads the bilayer. The Cytoplasmic portion of the chain corresponds to 291–296 (QRRTSK).

This sequence belongs to the EamA transporter family.

Its subcellular location is the cell inner membrane. This is Protein RarD (rarD) from Escherichia coli (strain K12).